A 148-amino-acid chain; its full sequence is Thiol-disulfide oxidoreductase YkuV (148 aa).

One can recognise a Thioredoxin domain in the interval 2–145 (KLRQPMPELT…LEKRVNRVLA (144 aa)). A disulfide bridge connects residues C41 and C44.

As to quaternary structure, monomer.

It is found in the cytoplasm. In terms of biological role, participates in various redox reactions through the reversible oxidation of its active center dithiol to a disulfide and catalyzes dithiol-disulfide exchange reactions. The sequence is that of Thiol-disulfide oxidoreductase YkuV (ykuV) from Bacillus subtilis (strain 168).